The chain runs to 335 residues: uncharacterized protein (335 aa).

This sequence belongs to the glycosyltransferase group 1 family. Glycosyltransferase 4 subfamily.

This is an uncharacterized protein from Sulfolobus islandicus rod-shaped virus 1 (SIRV-1).